A 156-amino-acid polypeptide reads, in one-letter code: Ribosomal RNA large subunit methyltransferase H (156 aa).

S-adenosyl-L-methionine-binding positions include Leu73, Gly104, and 123–128 (LSKLTL).

Belongs to the RNA methyltransferase RlmH family. In terms of assembly, homodimer.

Its subcellular location is the cytoplasm. It catalyses the reaction pseudouridine(1915) in 23S rRNA + S-adenosyl-L-methionine = N(3)-methylpseudouridine(1915) in 23S rRNA + S-adenosyl-L-homocysteine + H(+). Its function is as follows. Specifically methylates the pseudouridine at position 1915 (m3Psi1915) in 23S rRNA. This Idiomarina loihiensis (strain ATCC BAA-735 / DSM 15497 / L2-TR) protein is Ribosomal RNA large subunit methyltransferase H.